The sequence spans 761 residues: MTTAVTGEHHASVQRIQLRISGMSCSACAHRVESTLNKLPGVRAAVNFGTRVATIDTSEAVDAAALCQAVRRAGYQADLCTDDGRSASDPDADHARQLLIRLAIAAVLFVPVADLSVMFGVVPATRFTGWQWVLSALALPVVTWAAWPFHRVAMRNARHHAASMETLISVGITAATIWSLYTVFGNHSPIERSGIWQALLGSDAIYFEVAAGVTVFVLVGRYFEARAKSQAGSALRALAALSAKEVAVLLPDGSEMVIPADELKEQQRFVVRPGQIVAADGLAVDGSAAVDMSAMTGEAKPTRVRPGGQVIGGTTVLDGRLIVEAAAVGADTQFAGMVRLVEQAQAQKADAQRLADRISSVFVPAVLVIAALTAAGWLIAGGQPDRAVSAALAVLVIACPCALGLATPTAMMVASGRGAQLGIFLKGYKSLEATRAVDTVVFDKTGTLTTGRLQVSAVTAAPGWEADQVLALAATVEAASEHSVALAIAAATTRRDAVTDFRAIPGRGVSGTVSGRAVRVGKPSWIGSSSCHPNMRAARRHAESLGETAVFVEVDGEPCGVIAVADAVKDSARDAVAALADRGLRTMLLTGDNPESAAAVATRVGIDEVIADILPEGKVDVIEQLRDRGHVVAMVGDGINDGPALARADLGMAIGRGTDVAIGAADIILVRDHLDVVPLALDLARATMRTVKLNMVWAFGYNIAAIPVAAAGLLNPLVAGAAMAFSSFFVVSNSLRLRKFGRYPLGCGTVGGPQMTAPSSA.

Position 2 is an N-acetylthreonine (threonine 2). The region spanning 14–78 (QRIQLRISGM…AVRRAGYQAD (65 aa)) is the HMA domain. The Cu(+) site is built by cysteine 25 and cysteine 28. Transmembrane regions (helical) follow at residues 102–122 (LAIA…FGVV), 129–149 (GWQW…AWPF), 164–184 (METL…YTVF), 199–219 (LLGS…FVLV), 361–381 (VFVP…LIAG), and 387–407 (AVSA…GLAT). Aspartate 443 serves as the catalytic 4-aspartylphosphate intermediate. Transmembrane regions (helical) follow at residues 695–714 (MVWA…AGLL) and 718–735 (VAGA…SNSL).

The protein belongs to the cation transport ATPase (P-type) (TC 3.A.3) family. Type IB subfamily.

The protein localises to the cell membrane. It catalyses the reaction Cu(+)(in) + ATP + H2O = Cu(+)(out) + ADP + phosphate + H(+). Its activity is regulated as follows. ATPase activity is stimulated by Cu(+) ions. Functionally, involved in copper export. Could be involved in the copper detoxification of mycobacterial cells. This Mycobacterium tuberculosis (strain ATCC 25618 / H37Rv) protein is Copper-exporting P-type ATPase (ctpA).